The chain runs to 299 residues: 4-diphosphocytidyl-2-C-methyl-D-erythritol kinase (299 aa).

Residue Lys-17 is part of the active site. Position 99–109 (99–109 (PLASGLGGGSS)) interacts with ATP. Asp-142 is an active-site residue.

Belongs to the GHMP kinase family. IspE subfamily.

It carries out the reaction 4-CDP-2-C-methyl-D-erythritol + ATP = 4-CDP-2-C-methyl-D-erythritol 2-phosphate + ADP + H(+). It functions in the pathway isoprenoid biosynthesis; isopentenyl diphosphate biosynthesis via DXP pathway; isopentenyl diphosphate from 1-deoxy-D-xylulose 5-phosphate: step 3/6. Functionally, catalyzes the phosphorylation of the position 2 hydroxy group of 4-diphosphocytidyl-2C-methyl-D-erythritol. The polypeptide is 4-diphosphocytidyl-2-C-methyl-D-erythritol kinase (Deinococcus radiodurans (strain ATCC 13939 / DSM 20539 / JCM 16871 / CCUG 27074 / LMG 4051 / NBRC 15346 / NCIMB 9279 / VKM B-1422 / R1)).